A 92-amino-acid chain; its full sequence is Small ribosomal subunit protein bS20 (92 aa).

The disordered stretch occupies residues 1 to 23 (MANTPSAKKRAKQAEKRRSHNAS). Residues 7–20 (AKKRAKQAEKRRSH) are compositionally biased toward basic residues.

The protein belongs to the bacterial ribosomal protein bS20 family.

In terms of biological role, binds directly to 16S ribosomal RNA. The polypeptide is Small ribosomal subunit protein bS20 (Pseudomonas savastanoi pv. phaseolicola (strain 1448A / Race 6) (Pseudomonas syringae pv. phaseolicola (strain 1448A / Race 6))).